The following is a 225-amino-acid chain: NAD(P)H-quinone oxidoreductase subunit K, chloroplastic (225 aa).

Residues cysteine 43, cysteine 44, cysteine 108, and cysteine 139 each coordinate [4Fe-4S] cluster.

Belongs to the complex I 20 kDa subunit family. In terms of assembly, NDH is composed of at least 16 different subunits, 5 of which are encoded in the nucleus. [4Fe-4S] cluster is required as a cofactor.

Its subcellular location is the plastid. It localises to the chloroplast thylakoid membrane. It catalyses the reaction a plastoquinone + NADH + (n+1) H(+)(in) = a plastoquinol + NAD(+) + n H(+)(out). The enzyme catalyses a plastoquinone + NADPH + (n+1) H(+)(in) = a plastoquinol + NADP(+) + n H(+)(out). In terms of biological role, NDH shuttles electrons from NAD(P)H:plastoquinone, via FMN and iron-sulfur (Fe-S) centers, to quinones in the photosynthetic chain and possibly in a chloroplast respiratory chain. The immediate electron acceptor for the enzyme in this species is believed to be plastoquinone. Couples the redox reaction to proton translocation, and thus conserves the redox energy in a proton gradient. This chain is NAD(P)H-quinone oxidoreductase subunit K, chloroplastic, found in Gossypium barbadense (Sea Island cotton).